The sequence spans 247 residues: Adenosylcobinamide-GDP ribazoletransferase (247 aa).

Helical transmembrane passes span 34-54, 59-79, 113-133, 138-158, and 194-214; these read IITF…VFMV, CGAP…TGGF, GGLA…ELAL, ILAS…LLMY, and VLLP…AIFI.

This sequence belongs to the CobS family. Mg(2+) is required as a cofactor.

It localises to the cell inner membrane. It carries out the reaction alpha-ribazole + adenosylcob(III)inamide-GDP = adenosylcob(III)alamin + GMP + H(+). The enzyme catalyses alpha-ribazole 5'-phosphate + adenosylcob(III)inamide-GDP = adenosylcob(III)alamin 5'-phosphate + GMP + H(+). The protein operates within cofactor biosynthesis; adenosylcobalamin biosynthesis; adenosylcobalamin from cob(II)yrinate a,c-diamide: step 7/7. In terms of biological role, joins adenosylcobinamide-GDP and alpha-ribazole to generate adenosylcobalamin (Ado-cobalamin). Also synthesizes adenosylcobalamin 5'-phosphate from adenosylcobinamide-GDP and alpha-ribazole 5'-phosphate. This is Adenosylcobinamide-GDP ribazoletransferase from Escherichia coli O45:K1 (strain S88 / ExPEC).